The sequence spans 515 residues: 2,3-bisphosphoglycerate-independent phosphoglycerate mutase 1 (515 aa).

2 residues coordinate Mn(2+): D14 and S64. The active-site Phosphoserine intermediate is S64. Residues H125, 155 to 156, R187, R193, 264 to 267, and K337 each bind substrate; these read RD and RADR. Mn(2+)-binding residues include D404, H408, D445, H446, and H464.

This sequence belongs to the BPG-independent phosphoglycerate mutase family. The cofactor is Mn(2+).

The catalysed reaction is (2R)-2-phosphoglycerate = (2R)-3-phosphoglycerate. Its pathway is carbohydrate degradation; glycolysis; pyruvate from D-glyceraldehyde 3-phosphate: step 3/5. Catalyzes the interconversion of 2-phosphoglycerate and 3-phosphoglycerate. The sequence is that of 2,3-bisphosphoglycerate-independent phosphoglycerate mutase 1 from Methanosarcina acetivorans (strain ATCC 35395 / DSM 2834 / JCM 12185 / C2A).